A 436-amino-acid chain; its full sequence is Histidinol dehydrogenase (436 aa).

Positions 242, 264, and 267 each coordinate substrate. Residues Q264 and H267 each coordinate Zn(2+). Residues E332 and H333 each act as proton acceptor in the active site. Residues H333, D366, E420, and H425 each contribute to the substrate site. Residue D366 coordinates Zn(2+). H425 serves as a coordination point for Zn(2+).

It belongs to the histidinol dehydrogenase family. Requires Zn(2+) as cofactor.

The catalysed reaction is L-histidinol + 2 NAD(+) + H2O = L-histidine + 2 NADH + 3 H(+). Its pathway is amino-acid biosynthesis; L-histidine biosynthesis; L-histidine from 5-phospho-alpha-D-ribose 1-diphosphate: step 9/9. Its function is as follows. Catalyzes the sequential NAD-dependent oxidations of L-histidinol to L-histidinaldehyde and then to L-histidine. The chain is Histidinol dehydrogenase from Nitratidesulfovibrio vulgaris (strain ATCC 29579 / DSM 644 / CCUG 34227 / NCIMB 8303 / VKM B-1760 / Hildenborough) (Desulfovibrio vulgaris).